The chain runs to 959 residues: Vacuolar membrane protease (959 aa).

The Cytoplasmic portion of the chain corresponds to 1 to 13; sequence MARLNPLSFTPGP. Residues 14-34 traverse the membrane as a helical segment; the sequence is VIFFTCAVYIALFAALLTVHL. The Vacuolar segment spans residues 35–378; that stretch reads RVPDYPSKTP…KVFVVFQLHT (344 aa). Asn-48, Asn-102, and Asn-105 each carry an N-linked (GlcNAc...) asparagine glycan. Residues 128-149 are disordered; the sequence is GSEDDEPYHSPQSSPPGERRLD. Zn(2+) contacts are provided by His-158 and Asp-170. Catalysis depends on Glu-204, which acts as the Proton acceptor. Zn(2+)-binding residues include Glu-205, Glu-230, and His-303. Residues 379-399 form a helical membrane-spanning segment; the sequence is MFALCVTLLVVAPLFLIGLTF. The Cytoplasmic portion of the chain corresponds to 400 to 432; sequence GLSKADKNYLFARKAYMYSSDDDHPVHLYGWRG. Residues 433-453 form a helical membrane-spanning segment; it reads FFRFPIVFSIATAVVVGLAYL. Topologically, residues 454–463 are vacuolar; the sequence is MVRLNPLILY. The chain crosses the membrane as a helical span at residues 464–484; the sequence is SSPYAVWSMMLSAWFSVAWFF. Residues 485–498 lie on the Cytoplasmic side of the membrane; the sequence is SRGASAMRPSALQR. The helical transmembrane segment at 499 to 519 threads the bilayer; sequence MYALIWLFAGSFALLAFVTVL. Over 520-524 the chain is Vacuolar; that stretch reads SNNYQ. The helical transmembrane segment at 525–545 threads the bilayer; it reads VAGGYFALFYFAGIFLALVLS. At 546-645 the chain is on the cytoplasmic side; the sequence is YLELFFAPTK…YPGEQDWSGK (100 aa). Disordered regions lie at residues 566 to 594 and 606 to 635; these read DEPV…DATE and FARH…LKQP. Over residues 612–626 the composition is skewed to basic and acidic residues; the sequence is RRDSIDDENGNRDEE. Residues 646–666 form a helical membrane-spanning segment; sequence LPGWLWLLQLLLVAPIVVILV. The Vacuolar portion of the chain corresponds to 667–688; sequence GQIALLLTSALHQTPADGNSSL. Asn-685 is a glycosylation site (N-linked (GlcNAc...) asparagine). The chain crosses the membrane as a helical span at residues 689 to 709; sequence FVYLAFALLTTLLLAPIGPFI. Residues 710–716 lie on the Cytoplasmic side of the membrane; sequence HRFTWHV. Residues 717–737 form a helical membrane-spanning segment; sequence PTFVFLVCVATVIYNLVAFPF. Over 738–959 the chain is Vacuolar; that stretch reads SREHRLKVYF…LVEGFKYFQV (222 aa). Asn-785, Asn-818, Asn-834, Asn-864, and Asn-899 each carry an N-linked (GlcNAc...) asparagine glycan.

This sequence belongs to the peptidase M28 family. Zn(2+) serves as cofactor.

It is found in the vacuole membrane. May be involved in vacuolar sorting and osmoregulation. This Phaeosphaeria nodorum (strain SN15 / ATCC MYA-4574 / FGSC 10173) (Glume blotch fungus) protein is Vacuolar membrane protease.